The chain runs to 144 residues: Granulocyte-macrophage colony-stimulating factor (144 aa).

Residues 1 to 17 (MWLQNLLLLGTVVCSFS) form the signal peptide. Residue serine 24 is glycosylated (O-linked (GalNAc...) serine). O-linked (GalNAc...) threonine glycosylation is present at threonine 27. N-linked (GlcNAc...) asparagine glycosylation is found at asparagine 44 and asparagine 54. Intrachain disulfides connect cysteine 71-cysteine 113 and cysteine 105-cysteine 138.

It belongs to the GM-CSF family. Monomer. The signaling GM-CSF receptor complex is a dodecamer of two head-to-head hexamers of two alpha, two beta, and two ligand subunits.

The protein resides in the secreted. Functionally, cytokine that stimulates the growth and differentiation of hematopoietic precursor cells from various lineages, including granulocytes, macrophages, eosinophils and erythrocytes. The chain is Granulocyte-macrophage colony-stimulating factor (CSF2) from Cervus elaphus (Red deer).